Here is a 1002-residue protein sequence, read N- to C-terminus: Transposase for transposon gamma-delta (1002 aa).

The protein belongs to the transposase 7 family.

Its function is as follows. Required for transposition of transposon Tn1000. The sequence is that of Transposase for transposon gamma-delta (tnpA) from Escherichia coli (strain K12).